A 131-amino-acid polypeptide reads, in one-letter code: Translation initiation factor 5A (131 aa).

Lys37 is modified (hypusine).

Belongs to the eIF-5A family.

The protein resides in the cytoplasm. Functionally, functions by promoting the formation of the first peptide bond. In Methanococcus maripaludis (strain DSM 14266 / JCM 13030 / NBRC 101832 / S2 / LL), this protein is Translation initiation factor 5A.